A 141-amino-acid chain; its full sequence is Meiotically up-regulated gene 118 protein (141 aa).

Residues 106–115 (LSSQKSARQP) show a composition bias toward polar residues. The disordered stretch occupies residues 106–141 (LSSQKSARQPTKTVASSSSSSSKSTTVSKSSSKSQV). Residues 116 to 141 (TKTVASSSSSSSKSTTVSKSSSKSQV) show a composition bias toward low complexity.

Its subcellular location is the nucleus. In terms of biological role, has a role in meiosis. The chain is Meiotically up-regulated gene 118 protein (mug118) from Schizosaccharomyces pombe (strain 972 / ATCC 24843) (Fission yeast).